Reading from the N-terminus, the 115-residue chain is Secreted RxLR effector protein 2 (115 aa).

A signal peptide spans 1–22 (MICRSPLIVVMLFVIAAHTVLA). A RxLR-dEER motif is present at residues 57-82 (RFLRQETTFEKKLGVNDVHAVHAEER).

Belongs to the RxLR effector family.

The protein localises to the secreted. It localises to the host cytoplasm. Its subcellular location is the host nucleus. In terms of biological role, effector that acts as a broad suppressor of cell death to interrupt plant immunity. Inhibits cell death induced by cell death-inducing proteins, including the PAMP elicitor INF1 from P.infestans. This chain is Secreted RxLR effector protein 2, found in Plasmopara viticola (Downy mildew of grapevine).